The sequence spans 148 residues: U2 snRNP component IST3 (148 aa).

The RRM domain occupies 31-109 (AYIYIGNLNR…RALKIDHTFY (79 aa)).

It belongs to the IST3 family. In terms of assembly, component of the 45S U1.U2.U4/U6.U5 penta-snRNP particle, a subcomplex of the spliceosome. Belongs to the CWC complex (or CEF1-associated complex), a spliceosome sub-complex reminiscent of a late-stage spliceosome composed of the U2, U5 and U6 snRNAs and at least BUD13, BUD31, BRR2, CDC40, CEF1, CLF1, CUS1, CWC2, CWC15, CWC21, CWC22, CWC23, CWC24, CWC25, CWC27, ECM2, HSH155, IST3, ISY1, LEA1, MSL1, NTC20, PRP8, PRP9, PRP11, PRP19, PRP21, PRP22, PRP45, PRP46, SLU7, SMB1, SMD1, SMD2, SMD3, SMX2, SMX3, SNT309, SNU114, SPP2, SYF1, SYF2, RSE1 and YJU2. Belongs to the pre-mRNA retention and splicing (RES) complex composed of at least BUD13, IST3 and PML1. Subunit of the U2 snRNP. Interacts with RDS3.

The protein localises to the cytoplasm. It is found in the nucleus. Required for pre-mRNA splicing and spliceosome assembly. As part of the pre-mRNA retention and splicing (RES) complex, required for nuclear pre-mRNA retention and efficient splicing. Required for MER1-activated splicing. The polypeptide is U2 snRNP component IST3 (IST3) (Saccharomyces cerevisiae (strain ATCC 204508 / S288c) (Baker's yeast)).